The primary structure comprises 85 residues: Phosphocarrier protein HPr (85 aa).

Residues 1–85 (MYSKDVEIIA…HLVALIPTLE (85 aa)) form the HPr domain. His15 (pros-phosphohistidine intermediate) is an active-site residue.

The protein belongs to the HPr family.

Its subcellular location is the cytoplasm. Functionally, general (non sugar-specific) component of the phosphoenolpyruvate-dependent sugar phosphotransferase system (sugar PTS). This major carbohydrate active-transport system catalyzes the phosphorylation of incoming sugar substrates concomitantly with their translocation across the cell membrane. The phosphoryl group from phosphoenolpyruvate (PEP) is transferred to the phosphoryl carrier protein HPr by enzyme I. Phospho-HPr then transfers it to the PTS EIIA domain. The sequence is that of Phosphocarrier protein HPr (ptsH) from Haemophilus influenzae (strain ATCC 51907 / DSM 11121 / KW20 / Rd).